The sequence spans 286 residues: uncharacterized protein (286 aa).

The first 19 residues, 1 to 19 (MISKEYISLLSALLTKGYS), serve as a signal peptide directing secretion.

This is an uncharacterized protein from Acidianus filamentous virus 2 (isolate Italy/Pozzuoli) (AFV-2).